We begin with the raw amino-acid sequence, 231 residues long: Two-component response regulator ARR3 (231 aa).

In terms of domain architecture, Response regulatory spans 34–161 (HVLAVDDSLV…DVKRLRSYLT (128 aa)). Asp-94 carries the post-translational modification 4-aspartylphosphate. Residues 170–231 (GNKRKLTTPP…DSPMRSPGLA (62 aa)) form a disordered region. Residues 185–199 (SATSSMESSDSTVES) are compositionally biased toward low complexity. Positions 210–221 (LTMSPESATSLV) are enriched in polar residues.

This sequence belongs to the ARR family. Type-A subfamily. Two-component system major event consists of a His-to-Asp phosphorelay between a sensor histidine kinase (HK) and a response regulator (RR). In plants, the His-to-Asp phosphorelay involves an additional intermediate named Histidine-containing phosphotransfer protein (HPt). This multistep phosphorelay consists of a His-Asp-His-Asp sequential transfer of a phosphate group between first a His and an Asp of the HK protein, followed by the transfer to a conserved His of the HPt protein and finally the transfer to an Asp in the receiver domain of the RR protein. As to expression, predominantly expressed in roots.

The protein localises to the nucleus. In terms of biological role, functions as a response regulator involved in His-to-Asp phosphorelay signal transduction system. Phosphorylation of the Asp residue in the receiver domain activates the ability of the protein to promote the transcription of target genes. Type-A response regulators seem to act as negative regulators of the cytokinin signaling. In Arabidopsis thaliana (Mouse-ear cress), this protein is Two-component response regulator ARR3 (ARR3).